Consider the following 184-residue polypeptide: Photosystem I assembly protein Ycf4 (184 aa).

The next 2 helical transmembrane spans lie at 22-42 and 57-77; these read FCWAFILFLGSLGFLLVGTSS and IIFFPQGIVMSFYGIAGLFIS.

This sequence belongs to the Ycf4 family.

It is found in the plastid. Its subcellular location is the chloroplast thylakoid membrane. Functionally, seems to be required for the assembly of the photosystem I complex. The polypeptide is Photosystem I assembly protein Ycf4 (Lobularia maritima (Sweet alyssum)).